The chain runs to 1062 residues: SLIT-ROBO Rho GTPase-activating protein 1 (1062 aa).

An F-BAR domain is found at 19–314; the sequence is SQVKEIRAQL…AVDNLEPRSD (296 aa). Residues 352–382 adopt a coiled-coil conformation; the sequence is QAELMLRNQQLQSRLATLKIESEEVKKTTEA. Serine 416 carries the post-translational modification Phosphoserine. The 191-residue stretch at 481–671 folds into the Rho-GAP domain; the sequence is GRRNSHARHQ…TIIIHHETIF (191 aa). Residues 720-779 enclose the SH3 domain; that stretch reads CEPIEAIAKFDYVGRSARELSFKKGASLLLYHRASEDWWEGRHNGIDGLVPHQYIVVQDM. Residues 785-799 are compositionally biased toward polar residues; the sequence is DTLSQKADSEASSGP. Residues 785 to 931 are disordered; it reads DTLSQKADSE…TGFNDHKPLD (147 aa). Phosphoserine is present on residues serine 812 and serine 894. Basic and acidic residues predominate over residues 899–908; the sequence is SRHDSLKKID. Serine 909 carries the phosphoserine modification. A compositionally biased stretch (polar residues) spans 914-923; that stretch reads RSTSSGQYTG. The stretch at 933 to 960 forms a coiled coil; sequence ETIAQDIEETMNTALNELRELERQSTVK. A compositionally biased stretch (polar residues) spans 974-988; it reads KNSPTPATSTESLSP. Disordered stretches follow at residues 974 to 1013 and 1028 to 1062; these read KNSPTPATSTESLSPLHNVALRGSEPQIRRSTSSSSETMS and KPPALRPKPAVLPKTNPTMGPAAPSQGPTDKSCTM. At serine 976 the chain carries Phosphoserine. Residue threonine 978 is modified to Phosphothreonine. The span at 1004–1013 shows a compositional bias: low complexity; sequence STSSSSETMS. Serine 1009 is modified (phosphoserine). The span at 1053-1062 shows a compositional bias: polar residues; sequence QGPTDKSCTM.

As to quaternary structure, homodimer. Forms a heterooligomer with SRGAP2 and SRGAP3 through its F-BAR domain. Interacts with CDC42 and RHOA. Interacts with FASLG. Interacts (via SH3 domain) with ROBO1.

GTPase-activating protein for RhoA and Cdc42 small GTPases. Together with CDC42 seems to be involved in the pathway mediating the repulsive signaling of Robo and Slit proteins in neuronal migration. SLIT2, probably through interaction with ROBO1, increases the interaction of SRGAP1 with ROBO1 and inactivates CDC42. The protein is SLIT-ROBO Rho GTPase-activating protein 1 (Srgap1) of Mus musculus (Mouse).